Here is a 343-residue protein sequence, read N- to C-terminus: Cytoplasmic tRNA 2-thiolation protein 1 (343 aa).

This sequence belongs to the TtcA family. CTU1/NCS6/ATPBD3 subfamily.

The protein resides in the cytoplasm. It functions in the pathway tRNA modification; 5-methoxycarbonylmethyl-2-thiouridine-tRNA biosynthesis. Plays a central role in 2-thiolation of mcm(5)S(2)U at tRNA wobble positions of tRNA(Lys), tRNA(Glu) and tRNA(Gln). Directly binds tRNAs and probably acts by catalyzing adenylation of tRNAs, an intermediate required for 2-thiolation. It is unclear whether it acts as a sulfurtransferase that transfers sulfur from thiocarboxylated URM1 onto the uridine of tRNAs at wobble position. The sequence is that of Cytoplasmic tRNA 2-thiolation protein 1 from Drosophila pseudoobscura pseudoobscura (Fruit fly).